The following is a 285-amino-acid chain: Eukaryotic translation initiation factor 3 subunit F-2 (285 aa).

One can recognise an MPN domain in the interval 11–145 (VYLKPLVFFQ…TRLYCAVEMG (135 aa)).

It belongs to the eIF-3 subunit F family. As to quaternary structure, component of the eukaryotic translation initiation factor 3 (eIF-3) complex. The eIF-3 complex interacts with pix.

The protein localises to the cytoplasm. Functionally, component of the eukaryotic translation initiation factor 3 (eIF-3) complex, which is involved in protein synthesis of a specialized repertoire of mRNAs and, together with other initiation factors, stimulates binding of mRNA and methionyl-tRNAi to the 40S ribosome. The eIF-3 complex specifically targets and initiates translation of a subset of mRNAs involved in cell proliferation. The protein is Eukaryotic translation initiation factor 3 subunit F-2 of Drosophila melanogaster (Fruit fly).